We begin with the raw amino-acid sequence, 496 residues long: Geranylhydroquinone 3''-hydroxylase CYP76B74 (496 aa).

A helical transmembrane segment spans residues Tyr3–Lys23. Cys436 provides a ligand contact to heme.

The protein belongs to the cytochrome P450 family. Heme is required as a cofactor.

The protein resides in the endoplasmic reticulum membrane. The enzyme catalyses (2E)-geranylhydroquinone + reduced [NADPH--hemoprotein reductase] + O2 = (2Z)-3''-hydroxygeranylhydroquinone + oxidized [NADPH--hemoprotein reductase] + H2O + H(+). Functionally, hydroxylase involved in the biosynthesis pathway of the red naphthoquinone pigment shikonin. Catalyzes the key step C-3''-hydroxylation of the prenylated phenolic intermediate geranylhydroquinone to form 3''-hydroxygeranylhydroquinone. The chain is Geranylhydroquinone 3''-hydroxylase CYP76B74 from Arnebia euchroma (Pink arnebia).